The chain runs to 624 residues: Probable pectinesterase/pectinesterase inhibitor 47 (624 aa).

The signal sequence occupies residues 1–19 (MQTHSSSLVFLALLCLSWA). The disordered stretch occupies residues 24 to 88 (PTRPPSQPPS…PSPLPPNIAC (65 aa)). Residues 25–84 (TRPPSQPPSHPPIQPSSQPPTQPPSQPPTQPPTQPPSHPPTQPPTPPPSQSPSQPSPLPP) are compositionally biased toward pro residues. The segment at 74 to 236 (QSPSQPSPLP…TRLYSVSLGL (163 aa)) is pectinesterase inhibitor 47. 4 N-linked (GlcNAc...) asparagine glycosylation sites follow: Asn225, Asn330, Asn369, and Asn376. The interval 307–606 (AVTVGPYETD…FTVYNFTLGD (300 aa)) is pectinesterase 47. Thr385 is a binding site for substrate. Asn387 is a glycosylation site (N-linked (GlcNAc...) asparagine). Gln415 serves as a coordination point for substrate. Asp438 acts as the Proton donor; for pectinesterase activity in catalysis. Cys452 and Cys472 are oxidised to a cystine. The active-site Nucleophile; for pectinesterase activity is Asp459. N-linked (GlcNAc...) asparagine glycosylation occurs at Asn505. 2 residues coordinate substrate: Arg527 and Trp529. N-linked (GlcNAc...) asparagine glycosylation is found at Asn555, Asn596, and Asn601.

It in the N-terminal section; belongs to the PMEI family. The protein in the C-terminal section; belongs to the pectinesterase family.

Its subcellular location is the secreted. It is found in the cell wall. It carries out the reaction [(1-&gt;4)-alpha-D-galacturonosyl methyl ester](n) + n H2O = [(1-&gt;4)-alpha-D-galacturonosyl](n) + n methanol + n H(+). The protein operates within glycan metabolism; pectin degradation; 2-dehydro-3-deoxy-D-gluconate from pectin: step 1/5. Functionally, acts in the modification of cell walls via demethylesterification of cell wall pectin. The protein is Probable pectinesterase/pectinesterase inhibitor 47 (PME47) of Arabidopsis thaliana (Mouse-ear cress).